The following is a 78-amino-acid chain: MTNKGQLLQDPFLNALRKEHVPVSIYLVNGIKLQGHIESFDQYVVLLRNTVTQMVYKHAISTVVPARAVNLSLESEAE.

A Sm domain is found at 10-69; the sequence is DPFLNALRKEHVPVSIYLVNGIKLQGHIESFDQYVVLLRNTVTQMVYKHAISTVVPARAV.

The protein belongs to the Hfq family. In terms of assembly, homohexamer.

Its function is as follows. RNA chaperone that binds small regulatory RNA (sRNAs) and mRNAs to facilitate mRNA translational regulation in response to envelope stress, environmental stress and changes in metabolite concentrations. Also binds with high specificity to tRNAs. This Janthinobacterium sp. (strain Marseille) (Minibacterium massiliensis) protein is RNA-binding protein Hfq.